The sequence spans 79 residues: MKTFLFLFAVLFFLDPAKNAFFDEKCSRVNGRCTASCLKNEELVALCQKNLKCCVTVQPCGKSKSNQSDEGSGHMGTWG.

An N-terminal signal peptide occupies residues 1–20; the sequence is MKTFLFLFAVLFFLDPAKNA. 3 disulfide bridges follow: Cys26–Cys53, Cys33–Cys47, and Cys37–Cys54.

The protein belongs to the beta-defensin family. As to expression, expressed in testis and to a lesser extent in epididymis (caput, corpus and cauda). Also weakly expressed in kidneys and colon.

It localises to the secreted. Has antibacterial activity. In Mus musculus (Mouse), this protein is Beta-defensin 15 (Defb15).